The primary structure comprises 311 residues: MSSLPSSRRTAGDTWAITESVGATALGVAAARAVETAATNPLIRDEFAKVLVSSAGTAWARLADADLAWLDGDQLGRRVHRVACDYQAVRTHFFDEYFGAAVDAGVRQVVILAAGLDARAYRLNWPAGTVVYEIDQPSVLEYKAGILQSHGAVPTARRHAVAVDLRDDWPAALIAAGFDGTQPTAWLAEGLLPYLPGDAADRLFDMVTALSAPGSQVAVEAFTMNTKGNTQRWNRMRERLGLDIDVQALTYHEPDRSDAAQWLATHGWQVHSVSNREEMARLGRAIPQDLVDETVRTTLLRGRLVTPAQPA.

S-adenosyl-L-methionine-binding positions include Asp135 and 164 to 165 (DL).

The protein belongs to the UPF0677 family.

Functionally, exhibits S-adenosyl-L-methionine-dependent methyltransferase activity. This chain is Putative S-adenosyl-L-methionine-dependent methyltransferase MRA_0152, found in Mycobacterium tuberculosis (strain ATCC 25177 / H37Ra).